Here is a 752-residue protein sequence, read N- to C-terminus: Glutamate carboxypeptidase 2 (752 aa).

Topologically, residues 1–19 are cytoplasmic; the sequence is MWNAQQDSDSAEALGRRQR. S10 is modified (phosphoserine). Residues 20 to 44 traverse the membrane as a helical; Signal-anchor for type II membrane protein segment; it reads WFCAGTLVLAFTGTFIIGFLFGWFI. The Extracellular segment spans residues 45-752; that stretch reads KPSNDSTSSV…AAAETLREVD (708 aa). N48, N78, N123, N155, and N197 each carry an N-linked (GlcNAc...) asparagine glycan. Substrate is bound by residues R212 and N259. Ca(2+) contacts are provided by T271 and Y274. The NAALADase stretch occupies residues 276 to 589; the sequence is ANEYAYRHEF…QVRGAMVFEL (314 aa). N338 carries an N-linked (GlcNAc...) asparagine glycan. H379 and D389 together coordinate Zn(2+). E426 contributes to the substrate binding site. E426 serves as the catalytic Nucleophile; for NAALADase activity. Position 427 (E427) interacts with Zn(2+). Ca(2+) is bound by residues E435 and E438. D455 lines the Zn(2+) pocket. Residues N461 and N478 are each glycosylated (N-linked (GlcNAc...) asparagine). Substrate contacts are provided by residues 519-520, N521, 536-538, Y554, and 554-555; these read SG, RAR, and YH. A Zn(2+)-binding site is contributed by H555. A glycan (N-linked (GlcNAc...) asparagine) is linked at N615. The Charge relay system role is filled by S630. N640 carries N-linked (GlcNAc...) asparagine glycosylation. Catalysis depends on charge relay system residues D668 and H691. A substrate-binding site is contributed by 701 to 702; that stretch reads KY.

The protein belongs to the peptidase M28 family. M28B subfamily. In terms of assembly, homodimer. The cofactor is Zn(2+). Widely expressed throughout brain regions with highest levels in the hippocampus, dentate gyrus, priform cortex, choroid plexus of ventricles, pineal gland, anterior lobe of the pituitary gland and supraoptic nucleus. High levels also found in the cerebral cortex, substantia nigra, pontine nucleus and the granule cell layer of cerebellum. Highly expressed in astrocytes and non-myelinating Schwann cells. Also expressed in kidney, localizing to the proximal brush border of the renal tube.

The protein localises to the cell membrane. It catalyses the reaction Release of an unsubstituted, C-terminal glutamyl residue, typically from Ac-Asp-Glu or folylpoly-gamma-glutamates.. With respect to regulation, the NAALADase activity is inhibited by beta-NAAG, quisqualic acid and 2-(phosphonomethyl)glutaric acid (PMG). Its function is as follows. Has both folate hydrolase and N-acetylated-alpha-linked-acidic dipeptidase (NAALADase) activity. Has a preference for tri-alpha-glutamate peptides. In the intestine, required for the uptake of folate. In the brain, modulates excitatory neurotransmission through the hydrolysis of the neuropeptide, N-aceylaspartylglutamate (NAAG), thereby releasing glutamate. Functionally, also exhibits a dipeptidyl-peptidase IV type activity. In vitro, cleaves Gly-Pro-AMC. This chain is Glutamate carboxypeptidase 2 (Folh1), found in Rattus norvegicus (Rat).